The sequence spans 72 residues: Translation initiation factor IF-1 (72 aa).

Positions 1–72 constitute an S1-like domain; the sequence is MAKEDCIEME…TKGRIKFRSK (72 aa).

It belongs to the IF-1 family. In terms of assembly, component of the 30S ribosomal translation pre-initiation complex which assembles on the 30S ribosome in the order IF-2 and IF-3, IF-1 and N-formylmethionyl-tRNA(fMet); mRNA recruitment can occur at any time during PIC assembly.

Its subcellular location is the cytoplasm. Its function is as follows. One of the essential components for the initiation of protein synthesis. Stabilizes the binding of IF-2 and IF-3 on the 30S subunit to which N-formylmethionyl-tRNA(fMet) subsequently binds. Helps modulate mRNA selection, yielding the 30S pre-initiation complex (PIC). Upon addition of the 50S ribosomal subunit IF-1, IF-2 and IF-3 are released leaving the mature 70S translation initiation complex. This is Translation initiation factor IF-1 from Francisella tularensis subsp. novicida (strain U112).